The following is a 225-amino-acid chain: 3-dehydroquinate dehydratase (225 aa).

Residues Ser-6, 30 to 32 (EWR), and Arg-62 each bind 3-dehydroquinate. The active-site Proton donor/acceptor is the His-118. Lys-143 (schiff-base intermediate with substrate) is an active-site residue. The 3-dehydroquinate site is built by Arg-186, Ser-205, and Gln-209.

This sequence belongs to the type-I 3-dehydroquinase family. As to quaternary structure, homodimer.

It catalyses the reaction 3-dehydroquinate = 3-dehydroshikimate + H2O. The protein operates within metabolic intermediate biosynthesis; chorismate biosynthesis; chorismate from D-erythrose 4-phosphate and phosphoenolpyruvate: step 3/7. Involved in the third step of the chorismate pathway, which leads to the biosynthesis of aromatic amino acids. Catalyzes the cis-dehydration of 3-dehydroquinate (DHQ) and introduces the first double bond of the aromatic ring to yield 3-dehydroshikimate. The chain is 3-dehydroquinate dehydratase from Streptococcus pneumoniae (strain Taiwan19F-14).